Consider the following 175-residue polypeptide: Sec-independent protein translocase protein TatB (175 aa).

Residues 1-21 (MLDLGLTKMALIGVVALVVLG) form a helical membrane-spanning segment. Disordered stretches follow at residues 104-132 (GGAL…RKNW) and 155-175 (SGAA…TRFF).

It belongs to the TatB family. In terms of assembly, the Tat system comprises two distinct complexes: a TatABC complex, containing multiple copies of TatA, TatB and TatC subunits, and a separate TatA complex, containing only TatA subunits. Substrates initially bind to the TatABC complex, which probably triggers association of the separate TatA complex to form the active translocon.

It localises to the cell inner membrane. Its function is as follows. Part of the twin-arginine translocation (Tat) system that transports large folded proteins containing a characteristic twin-arginine motif in their signal peptide across membranes. Together with TatC, TatB is part of a receptor directly interacting with Tat signal peptides. TatB may form an oligomeric binding site that transiently accommodates folded Tat precursor proteins before their translocation. The sequence is that of Sec-independent protein translocase protein TatB from Paraburkholderia xenovorans (strain LB400).